Here is a 376-residue protein sequence, read N- to C-terminus: Chorismate synthase ARO2 (376 aa).

Ser-2 is modified (N-acetylserine). Residue His-17 is part of the active site. A disordered region spans residues 39–61 (IQPQLTRRRPGQSKLSTPRDEKD). Residues His-104 and Asp-339 contribute to the active site.

It belongs to the chorismate synthase family. In terms of assembly, homotetramer.

The enzyme catalyses 5-O-(1-carboxyvinyl)-3-phosphoshikimate = chorismate + phosphate. It carries out the reaction FMNH2 + NADP(+) = FMN + NADPH + 2 H(+). It functions in the pathway metabolic intermediate biosynthesis; chorismate biosynthesis; chorismate from D-erythrose 4-phosphate and phosphoenolpyruvate: step 7/7. Functionally, bifunctional chorismate synthase and flavin reductase that catalyzes the conversion of 5-enolpyruvylshikimate 3-phosphate (EPSP) to form chorismate, which is the last common intermediate in the synthesis of the three aromatic amino acids phenylalanine, tyrosine and tryptophan. Also acts as a flavin reductase (FR) able to generate reduced flavin mononucleotide in the presence of NADPH. The sequence is that of Chorismate synthase ARO2 from Saccharomyces cerevisiae (strain ATCC 204508 / S288c) (Baker's yeast).